A 137-amino-acid polypeptide reads, in one-letter code: Large-conductance mechanosensitive channel (137 aa).

Transmembrane regions (helical) follow at residues 9-29, 32-52, 54-74, and 79-99; these read AFAV…GAAF, IVSS…IGGV, FGDL…VVLA, and IQSI…VKVI.

The protein belongs to the MscL family. Homopentamer.

The protein resides in the cell inner membrane. Its function is as follows. Channel that opens in response to stretch forces in the membrane lipid bilayer. May participate in the regulation of osmotic pressure changes within the cell. The chain is Large-conductance mechanosensitive channel from Pseudomonas fluorescens (strain ATCC BAA-477 / NRRL B-23932 / Pf-5).